The sequence spans 257 residues: UPF0246 protein BT_3869 (257 aa).

Belongs to the UPF0246 family.

The sequence is that of UPF0246 protein BT_3869 from Bacteroides thetaiotaomicron (strain ATCC 29148 / DSM 2079 / JCM 5827 / CCUG 10774 / NCTC 10582 / VPI-5482 / E50).